We begin with the raw amino-acid sequence, 445 residues long: MTRQYFGTDGVRGKVGTSPITPDFVMRLGYAAGTVLTKSRKASSRPVVLIGKDTRISGYMLEAALEAGFSAAGVDVMLAGPMPTPAIAYLTRALRLSAGVVISASHNPYEDNGIKFFSASGNKLPDAIELEIEAALNEPMSCVASEKLGRAKRLDDARGRYIEFCKSTFPNELDLRGTKLVVDCAHGAAYHIAPDVFHELGAEVIAIGNQPNGFNINEGYGATAPAALVEAVRANQAHLGIALDGDADRLLVVDAAGRVYNGDELLYIMVKDRMRVRPIEGAVGTLMTNMALEVAFKEMGVGFARANVGDRYVLEVLRERGWQVGGEGSGHMLCLDKHTTGDGIVSALQILSALKRSGLSLAELTQDIEMFPQTLINVKVEPGFDWKKNKELLAEKEAVEAELGDKGRVLIRASGTEPLIRVMVEAKDADIADKMARRIAAKLSK.

S105 functions as the Phosphoserine intermediate in the catalytic mechanism. S105, D244, D246, and D248 together coordinate Mg(2+). At S105 the chain carries Phosphoserine.

The protein belongs to the phosphohexose mutase family. Mg(2+) is required as a cofactor. In terms of processing, activated by phosphorylation.

The enzyme catalyses alpha-D-glucosamine 1-phosphate = D-glucosamine 6-phosphate. Its function is as follows. Catalyzes the conversion of glucosamine-6-phosphate to glucosamine-1-phosphate. The polypeptide is Phosphoglucosamine mutase (Janthinobacterium sp. (strain Marseille) (Minibacterium massiliensis)).